The chain runs to 283 residues: Nucleotide-binding protein ABBFA_002973 (283 aa).

9-16 (GQSGSGKS) lines the ATP pocket. 59 to 62 (DVRS) is a GTP binding site.

It belongs to the RapZ-like family.

Functionally, displays ATPase and GTPase activities. The polypeptide is Nucleotide-binding protein ABBFA_002973 (Acinetobacter baumannii (strain AB307-0294)).